The following is a 976-amino-acid chain: 3-O-beta-L-arabinopyranosyl-alpha-L-arabinofuranosidase (976 aa).

A signal peptide spans 1-28; that stretch reads MSHRNKALVAIVAGTALLISSGAAIGQA. Glutamate 190 acts as the Proton donor in catalysis. Glutamate 315 (nucleophile) is an active-site residue. Positions 519-654 constitute a CBM6 domain; that stretch reads LLVEEVENTV…DNTLDKFLLY (136 aa).

It belongs to the glycosyl hydrolase 39 family.

It is found in the secreted. The catalysed reaction is Hydrolysis of beta-L-Arap-(1-&gt;3)-L-Araf disaccharides from non-reducing terminals in branches of type II arabinogalactan attached to proteins.. In terms of biological role, hydrolase involved in the degradation of the gum arabic arabinogalactan protein (AGP) and larch AGP. Catalyzes the release of 3-O-beta-L-arabinopyranosyl-L-arabinose (beta-L-Arap-(1-&gt;3)-L-Ara) from gum arabic AGP and larch AGP. Also cleaves a small amount of beta-L-Arap-(1-&gt;3)-L-Ara from sugar beet arabinan, but wheat AGP cannot be used as a substrate. Can also release 3-O-alpha-D-galactopyranosyl-L-arabinose (alpha-D-Galp-(1-&gt;3)-L-Ara) from gum arabic AGP, with low efficiency. This chain is 3-O-beta-L-arabinopyranosyl-alpha-L-arabinofuranosidase, found in Bifidobacterium pseudocatenulatum.